A 350-amino-acid polypeptide reads, in one-letter code: Biotin synthase (350 aa).

Positions 41–265 constitute a Radical SAM core domain; that stretch reads NEVQISRLLS…VMPLSRVRLS (225 aa). Cys56, Cys60, and Cys63 together coordinate [4Fe-4S] cluster. Residues Cys100, Cys131, Cys191, and Arg263 each contribute to the [2Fe-2S] cluster site.

Belongs to the radical SAM superfamily. Biotin synthase family. In terms of assembly, homodimer. [4Fe-4S] cluster serves as cofactor. It depends on [2Fe-2S] cluster as a cofactor.

It catalyses the reaction (4R,5S)-dethiobiotin + (sulfur carrier)-SH + 2 reduced [2Fe-2S]-[ferredoxin] + 2 S-adenosyl-L-methionine = (sulfur carrier)-H + biotin + 2 5'-deoxyadenosine + 2 L-methionine + 2 oxidized [2Fe-2S]-[ferredoxin]. It functions in the pathway cofactor biosynthesis; biotin biosynthesis; biotin from 7,8-diaminononanoate: step 2/2. Catalyzes the conversion of dethiobiotin (DTB) to biotin by the insertion of a sulfur atom into dethiobiotin via a radical-based mechanism. The polypeptide is Biotin synthase (Shewanella loihica (strain ATCC BAA-1088 / PV-4)).